A 49-amino-acid polypeptide reads, in one-letter code: Large ribosomal subunit protein bL33 (49 aa).

It belongs to the bacterial ribosomal protein bL33 family.

The chain is Large ribosomal subunit protein bL33 from Carboxydothermus hydrogenoformans (strain ATCC BAA-161 / DSM 6008 / Z-2901).